The following is a 1073-amino-acid chain: Receptor-type guanylate cyclase gcy-23 (1073 aa).

The first 15 residues, 1–15, serve as a signal peptide directing secretion; the sequence is MRRELFIFLLLLGEC. Residues 16–458 lie on the Extracellular side of the membrane; that stretch reads ANVKVKVGHI…FRNEKCDYTT (443 aa). Asparagine 336 carries an N-linked (GlcNAc...) asparagine glycan. A helical membrane pass occupies residues 459-479; sequence LIIGGCIVLLIILLIICFFIL. The Cytoplasmic segment spans residues 480 to 1073; the sequence is SRVCENRALA…QQQNFSQLGI (594 aa). One can recognise a Protein kinase domain in the interval 508–808; that stretch reads MKSMLSIGSS…RVRLNTENYL (301 aa). Residues 813 to 844 are a coiled coil; sequence SLVDQMMRMMEQYANNLEKLVAERTGMLEEAN. The region spanning 878-1008 is the Guanylate cyclase domain; it reads TVMFSDIVGF…DTVNVASRME (131 aa). 3 residues coordinate Mg(2+): aspartate 883, isoleucine 884, and aspartate 927.

It belongs to the adenylyl cyclase class-4/guanylyl cyclase family. In terms of tissue distribution, expressed specifically in AFD sensory neurons.

It localises to the cell membrane. Its subcellular location is the cell projection. The protein resides in the cilium. The catalysed reaction is GTP = 3',5'-cyclic GMP + diphosphate. In terms of biological role, guanylate cyclase involved in the production of the second messenger cGMP. Regulates thermotaxis responses in AFD sensory neurons. May regulate AFD neuronal activity such as calcium responses to temperature gradients. The sequence is that of Receptor-type guanylate cyclase gcy-23 from Caenorhabditis elegans.